The sequence spans 661 residues: uncharacterized protein (661 aa).

The tract at residues 25–52 (LLPSEPPVGDMNNEDSDTNTSITQSPTN) is disordered. Residues 42 to 52 (TNTSITQSPTN) show a composition bias toward polar residues. The SANT domain occupies 246 to 297 (SMPDIWNEEQHSIFVQQFILHGKKFGKIAEAVPGKNSKECVLHYYLTKRTTD). Disordered stretches follow at residues 306-329 (TKTKGRRRKKLLPSQRGGKKKSKG), 478-499 (YYEPKLEQHSSSKRNSISTRKE), 548-570 (PMKMPLTPRRASTGPRPRPTFQL), and 604-633 (RIDELSVEDQEHTTHSSHTTSDINAFPNSQ). Positions 308–328 (TKGRRRKKLLPSQRGGKKKSK) are enriched in basic residues. Residues 478-487 (YYEPKLEQHS) show a composition bias toward basic and acidic residues. A compositionally biased stretch (basic and acidic residues) spans 604 to 617 (RIDELSVEDQEHTT).

Its subcellular location is the nucleus. This is an uncharacterized protein from Schizosaccharomyces pombe (strain 972 / ATCC 24843) (Fission yeast).